Reading from the N-terminus, the 593-residue chain is MEDYKQRIKNKLNVVPMEPGCYLMKDRNDQVIYVGKAKKLRNRLRSYFTGAHDAKTTRLVGEIRRFEFIVTSSETESLLLELNLIKQYQPRYNILLKDDKSYPFIKITKEKYPRLLVTRTVKQGTGKYFGPYPNAYSAQETKKLLDRIYPYRKCDKMPDKLCLYYHIGQCLGPCVYDVDLSKYAQMTKEITDFLNGEDKTILKSLEERMLTASESLDFERAKEYRDLIQHIQNLTNKQKIMSSDKTIRDVFGYSVDKGWMCIQVFFIRQGNMIKRDTTMIPLQQTEEEEFYTFIGQFYSLNQHILPKEVHVPRNLDKEMIQSVVDTKIVQPARGPKKDMVDLAAHNAKVSLNNKFELISRDESRTIKAIEELGTQMGIQTPIRIEAFDNSNIQGVDPVSAMVTFVDGKPDKKNYRKYKIKTVKGPDDYKSMREVVRRRYSRVLNEGLPLPDLIIVDGGKGHMNGVIDVLQNELGLDIPVAGLQKNDKHQTSELLYGASAEIVPLKKNSQAFYLLHRIQDEVHRFAITFHRQTRQKTGLKSILDDIDGIGSKRKTLLLRSFGSIKKMKEATLEDFKNIGIPENVAKNLHEQLHK.

In terms of domain architecture, GIY-YIG spans 17–94; it reads MEPGCYLMKD…IKQYQPRYNI (78 aa). Residues 199–234 form the UVR domain; the sequence is KTILKSLEERMLTASESLDFERAKEYRDLIQHIQNL.

The protein belongs to the UvrC family. Interacts with UvrB in an incision complex.

It is found in the cytoplasm. Functionally, the UvrABC repair system catalyzes the recognition and processing of DNA lesions. UvrC both incises the 5' and 3' sides of the lesion. The N-terminal half is responsible for the 3' incision and the C-terminal half is responsible for the 5' incision. This Staphylococcus aureus (strain bovine RF122 / ET3-1) protein is UvrABC system protein C.